A 631-amino-acid polypeptide reads, in one-letter code: Shootin-1 (631 aa).

Residue Met1 is modified to N-acetylmethionine. Phosphoserine occurs at positions 3 and 4. Residues 7-353 are a coiled coil; sequence EKQLQLITSL…RVNQSENSVP (347 aa). A Phosphoserine; by PAK1 modification is found at Ser101. Residue Ser249 is modified to Phosphoserine. Residues 343–511 are disordered; it reads KRVNQSENSV…SESKSMPVLG (169 aa). Residues 352–369 are compositionally biased toward pro residues; the sequence is VPPPPPPPPPLPPPPPNP. Ser375 carries the post-translational modification Phosphoserine. Residues 403-418 show a composition bias toward basic and acidic residues; sequence TDLKRQAVEEMMDRIK. Residues 456–465 are compositionally biased toward polar residues; the sequence is LNKSTSSRSL. At Ser473 the chain carries Phosphoserine. At Thr487 the chain carries Phosphothreonine. Residues 490–505 are compositionally biased toward polar residues; sequence ADSSSPTGILATSESK. Phosphoserine is present on Ser494. Position 496 is a phosphothreonine (Thr496). Residues Ser506, Ser515, Ser532, and Ser534 each carry the phosphoserine modification. 2 disordered regions span residues 524–566 and 579–631; these read KTLE…IGCR and VVVL…SSNC. Thr537 is modified (phosphothreonine). Positions 550–561 are enriched in polar residues; the sequence is CTSSKVTFQPPS. Residues 590-631 are compositionally biased toward basic and acidic residues; sequence PQTKDQVAEKDPTQHKEDEGEIQPENKEDSIENVRETDSSNC.

The protein belongs to the shootin family. As to quaternary structure, interacts with L1CAM; this interaction occurs in axonal growth cones. Interacts with actin filament retrograde flow; this interaction is enhanced in a netrin-1- and PAK1-dependent manner and promotes F-actin-substrate coupling and concomitant formation of traction forces at axonal growth cones. Interacts with RUFY3. Interacts with PFN2. Interacts (via N-terminus) with KIF20B; this interaction is direct and promotes the association of SHTN1 to microtubules in primary neurons. Associates with microtubule. Phosphorylated on Ser-101 and Ser-249 by PAK1 through a CDC42- and RAC1-dependent signaling pathway, which enhances its association with F-actin retrograde flow in filopodia and lamellipodia of axonal growth cones. Phosphorylation on Ser-101 and Ser-249 is increased by netrin-1.

The protein resides in the perikaryon. Its subcellular location is the cell projection. It is found in the axon. The protein localises to the growth cone. It localises to the cytoplasm. The protein resides in the cytoskeleton. Its subcellular location is the filopodium. It is found in the lamellipodium. Involved in the generation of internal asymmetric signals required for neuronal polarization and neurite outgrowth. Mediates netrin-1-induced F-actin-substrate coupling or 'clutch engagement' within the axon growth cone through activation of CDC42, RAC1 and PAK1-dependent signaling pathway, thereby converting the F-actin retrograde flow into traction forces, concomitantly with filopodium extension and axon outgrowth. Plays a role in cytoskeletal organization by regulating the subcellular localization of phosphoinositide 3-kinase (PI3K) activity at the axonal growth cone. Also plays a role in regenerative neurite outgrowth. In the developing cortex, cooperates with KIF20B to promote both the transition from the multipolar to the bipolar stage and the radial migration of cortical neurons from the ventricular zone toward the superficial layer of the neocortex. Involved in the accumulation of phosphatidylinositol 3,4,5-trisphosphate (PIP3) in the growth cone of primary hippocampal neurons. The polypeptide is Shootin-1 (Homo sapiens (Human)).